The chain runs to 708 residues: Chaperonin-containing T-complex member BBS12 (708 aa).

The protein belongs to the TCP-1 chaperonin family. BBS12 subfamily. Component of the chaperonin-containing T-complex (TRiC), a heterooligomeric complex of about 850 to 900 kDa that forms two stacked rings, 12 to 16 nm in diameter. Interacts with MKKS.

The protein localises to the cell projection. It is found in the cilium. Component of the chaperonin-containing T-complex (TRiC), a molecular chaperone complex that assists the folding of proteins upon ATP hydrolysis. As part of the TRiC complex may play a role in the assembly of BBSome, a complex involved in ciliogenesis regulating transports vesicles to the cilia. Involved in adipogenic differentiation. In Mus musculus (Mouse), this protein is Chaperonin-containing T-complex member BBS12 (Bbs12).